We begin with the raw amino-acid sequence, 283 residues long: NAD kinase (283 aa).

Aspartate 66 (proton acceptor) is an active-site residue. Residues 66-67 (DG), 140-141 (ND), arginine 151, arginine 168, aspartate 170, and glutamine 240 each bind NAD(+).

It belongs to the NAD kinase family. It depends on a divalent metal cation as a cofactor.

Its subcellular location is the cytoplasm. It carries out the reaction NAD(+) + ATP = ADP + NADP(+) + H(+). Its function is as follows. Involved in the regulation of the intracellular balance of NAD and NADP, and is a key enzyme in the biosynthesis of NADP. Catalyzes specifically the phosphorylation on 2'-hydroxyl of the adenosine moiety of NAD to yield NADP. The polypeptide is NAD kinase (Syntrophobacter fumaroxidans (strain DSM 10017 / MPOB)).